A 373-amino-acid chain; its full sequence is RNA cytidine acetyltransferase (373 aa).

R53 contributes to the ATP binding site. Acetyl-CoA is bound by residues 216–218 (IAT) and 223–229 (TGMGYGS). Positions 246-271 (GEFEEENEAAKPADEESDDESNLLKE) are disordered. R313 is a binding site for acetyl-CoA.

This sequence belongs to the RNA cytidine acetyltransferase family. NAT10 subfamily.

The protein resides in the nucleus. Its subcellular location is the nucleolus. The enzyme catalyses a cytidine in 18S rRNA + acetyl-CoA + ATP + H2O = an N(4)-acetylcytidine in 18S rRNA + ADP + phosphate + CoA + H(+). It catalyses the reaction a cytidine in tRNA + acetyl-CoA + ATP + H2O = an N(4)-acetylcytidine in tRNA + ADP + phosphate + CoA + H(+). In terms of biological role, RNA cytidine acetyltransferase with specificity toward both 18S rRNA and tRNAs. Catalyzes the formation of N(4)-acetylcytidine (ac4C) in 18S rRNA. Required for early nucleolar cleavages of precursor rRNA at sites A0, A1 and A2 during 18S rRNA synthesis. Catalyzes the formation of ac4C in serine and leucine tRNAs. Requires a tRNA-binding adapter protein for full tRNA acetyltransferase activity but not for 18S rRNA acetylation. The chain is RNA cytidine acetyltransferase from Achlya ambisexualis (Water mold).